A 446-amino-acid chain; its full sequence is Tubulin beta chain (446 aa).

Residues glutamine 11, glutamate 69, serine 138, glycine 142, threonine 143, glycine 144, asparagine 204, and asparagine 226 each contribute to the GTP site. Glutamate 69 contributes to the Mg(2+) binding site. Residues 427 to 446 (EAGVDEGEEFEEEEDFGDEQ) form a disordered region. Over residues 429-446 (GVDEGEEFEEEEDFGDEQ) the composition is skewed to acidic residues.

Belongs to the tubulin family. In terms of assembly, dimer of alpha and beta chains. A typical microtubule is a hollow water-filled tube with an outer diameter of 25 nm and an inner diameter of 15 nM. Alpha-beta heterodimers associate head-to-tail to form protofilaments running lengthwise along the microtubule wall with the beta-tubulin subunit facing the microtubule plus end conferring a structural polarity. Microtubules usually have 13 protofilaments but different protofilament numbers can be found in some organisms and specialized cells. It depends on Mg(2+) as a cofactor.

Its subcellular location is the cytoplasm. It is found in the cytoskeleton. Its function is as follows. Tubulin is the major constituent of microtubules, a cylinder consisting of laterally associated linear protofilaments composed of alpha- and beta-tubulin heterodimers. Microtubules grow by the addition of GTP-tubulin dimers to the microtubule end, where a stabilizing cap forms. Below the cap, tubulin dimers are in GDP-bound state, owing to GTPase activity of alpha-tubulin. The protein is Tubulin beta chain of Giardia intestinalis (Giardia lamblia).